The chain runs to 165 residues: Nucleotide-binding protein NATL1_05371 (165 aa).

This sequence belongs to the YajQ family.

Its function is as follows. Nucleotide-binding protein. In Prochlorococcus marinus (strain NATL1A), this protein is Nucleotide-binding protein NATL1_05371.